Here is a 353-residue protein sequence, read N- to C-terminus: MSGNSFERSDESNEQSSISIIEYVWIGGNGELRSKTRVLYSSIMTGYKLSDIPVWNYDGSSTNQANGSSSEVFLYPRNIYRCPFRRNVNGVIVICDTYDVNGVPLETNHRHNANIIFEKYQNEKPWYGLEQEYFIFRKDTNQPIGMEYASKQGQYYCSVGSQNAYGRRISDEHMEACLYAGIKISGTNLEVAPGQHEFQIGPVEGIDAADQLWIARFILEKISEHYDRYIVYHPKPLQGDWNGSGCHTNFSTESMRSEGGLTVIMEAVDKLRTKHSEHMKVYGIDNDLRLTGDHETASIDEFSHGIGSRQCSVRIPNDTVKNGYGYFEDRRPAANIDPYQVTSIILQTVCESD.

The GS beta-grasp domain occupies 19 to 102; sequence SIIEYVWIGG…VICDTYDVNG (84 aa). Residues 109-353 enclose the GS catalytic domain; it reads HRHNANIIFE…IILQTVCESD (245 aa).

This sequence belongs to the glutamine synthetase family.

It catalyses the reaction L-glutamate + NH4(+) + ATP = L-glutamine + ADP + phosphate + H(+). This is Putative glutamine synthetase from Acanthamoeba polyphaga (Amoeba).